The primary structure comprises 272 residues: Hydroxyacylglutathione hydrolase (272 aa).

Zn(2+) is bound by residues His-62, His-64, Asp-66, His-67, His-126, Asp-146, and His-184.

It belongs to the metallo-beta-lactamase superfamily. Glyoxalase II family. As to quaternary structure, monomer. It depends on Zn(2+) as a cofactor.

It catalyses the reaction an S-(2-hydroxyacyl)glutathione + H2O = a 2-hydroxy carboxylate + glutathione + H(+). The protein operates within secondary metabolite metabolism; methylglyoxal degradation; (R)-lactate from methylglyoxal: step 2/2. Thiolesterase that catalyzes the hydrolysis of S-D-lactoyl-glutathione to form glutathione and D-lactic acid. The sequence is that of Hydroxyacylglutathione hydrolase from Saccharophagus degradans (strain 2-40 / ATCC 43961 / DSM 17024).